The primary structure comprises 513 residues: Quiannulatic acid synthase (513 aa).

The helical transmembrane segment at 14 to 34 threads the bilayer; the sequence is VFTFCNIILALASLVVAQCVY. N308 carries N-linked (GlcNAc...) asparagine glycosylation. Residue C477 participates in heme binding.

This sequence belongs to the cytochrome P450 family. The cofactor is heme.

The protein localises to the membrane. The catalysed reaction is quiannulatene + 3 reduced [NADPH--hemoprotein reductase] + 3 O2 = quiannulatate + 3 oxidized [NADPH--hemoprotein reductase] + 4 H2O + 4 H(+). The protein operates within secondary metabolite biosynthesis; terpenoid biosynthesis. Cytochrome P450 monooxygenase; part of the gene cluster that mediates the biosynthesis of the pentacyclic sesterterpene quiannulatic acid. The first step of the pathway is performed by the sesterterpene synthase (QS) that possesses both prenyl transferase and terpene cyclase activity, converting isopentenyl diphosphate and dimethylallyl diphosphate into geranylfarnesyl diphosphate (GFPP) and further converting GFPP into quiannulatene via an unprecedented cyclization mode which involves three rounds of hydride shifts and two successive C-C bond migrations to construct the 5-6-5-5-5 fused ring. The cytochrome P450 monooxygenase Qnn-P450 then oxidizes quiannulatene at C-19 in 3 successive reactions to afford quiannulatic acid. The chain is Quiannulatic acid synthase from Emericella variicolor (Aspergillus stellatus).